The sequence spans 611 residues: Cilia- and flagella-associated protein 100 (611 aa).

Over residues 1–17 (MSEIPSTIVSKNMTNDK) the composition is skewed to polar residues. The interval 1 to 57 (MSEIPSTIVSKNMTNDKNSLESMNISSSSSTEENPKKQARKNEEHGPDPSANPFHLS) is disordered. The span at 20–32 (LESMNISSSSSTE) shows a compositional bias: low complexity. Residues 33–47 (ENPKKQARKNEEHGP) are compositionally biased toward basic and acidic residues. Coiled coils occupy residues 101–128 (SLRRQLQLEDKQEDLEARAEAEHQRAFR), 164–203 (ALDVKRREIQRLETLATKEEARLERAEKSLEKDAALFDEF), and 230–257 (LEIRDLTTQIVNIKSEISRFEDTLKHYK). Disordered regions lie at residues 287-323 (EVSEASKESSVNSTPGDKGPGIKGKASSMWAKEGQGT) and 338-380 (SPSY…GEEP). Over residues 338–357 (SPSYLSSPQQGSQPSESSGG) the composition is skewed to low complexity. 2 coiled-coil regions span residues 393–432 (VFRELEEQNLSLIQNSQETEKTLEELSHTLKHTQIRMDRE) and 526–578 (QVKI…RGRT).

This sequence belongs to the CFAP100 family.

Its subcellular location is the cytoplasm. The protein localises to the cytoskeleton. It localises to the cilium axoneme. In terms of biological role, may play a role in ciliary/flagellar motility by regulating the assembly and the activity of axonemal inner dynein arm. This Homo sapiens (Human) protein is Cilia- and flagella-associated protein 100.